Here is a 237-residue protein sequence, read N- to C-terminus: Heme oxygenase (237 aa).

A heme b-binding site is contributed by H17.

The protein belongs to the heme oxygenase family.

It localises to the plastid. It is found in the chloroplast. The catalysed reaction is heme b + 3 reduced [NADPH--hemoprotein reductase] + 3 O2 = biliverdin IXalpha + CO + Fe(2+) + 3 oxidized [NADPH--hemoprotein reductase] + 3 H2O + H(+). In terms of biological role, catalyzes the opening of the heme ring with the release of iron. Key enzyme in the synthesis of the chromophoric part of the photosynthetic antennae. The chain is Heme oxygenase (pbsA) from Guillardia theta (Cryptophyte).